Consider the following 328-residue polypeptide: GTPase Obg (328 aa).

Residues 2 to 160 enclose the Obg domain; that stretch reads YNFKDSVSIT…LNVRLELFLV (159 aa). Residues 161–326 form the OBG-type G domain; the sequence is ADIGLVGLPN…LIKEFFVLAK (166 aa). Residues 167–174, 192–196, 213–216, 280–283, and 307–309 contribute to the GTP site; these read GLPNAGKS, FTTKI, DIPG, NKLD, and SIY. Mg(2+) contacts are provided by Ser174 and Thr194.

This sequence belongs to the TRAFAC class OBG-HflX-like GTPase superfamily. OBG GTPase family. In terms of assembly, monomer. Mg(2+) is required as a cofactor.

Its subcellular location is the cytoplasm. Functionally, an essential GTPase which binds GTP, GDP and possibly (p)ppGpp with moderate affinity, with high nucleotide exchange rates and a fairly low GTP hydrolysis rate. Plays a role in control of the cell cycle, stress response, ribosome biogenesis and in those bacteria that undergo differentiation, in morphogenesis control. This chain is GTPase Obg, found in Borreliella afzelii (strain PKo) (Borrelia afzelii).